Consider the following 212-residue polypeptide: Ribosomal RNA small subunit methyltransferase G (212 aa).

Residues Gly80, Leu85, 131-132 (VE), and Arg146 each bind S-adenosyl-L-methionine.

The protein belongs to the methyltransferase superfamily. RNA methyltransferase RsmG family.

It is found in the cytoplasm. The catalysed reaction is guanosine(527) in 16S rRNA + S-adenosyl-L-methionine = N(7)-methylguanosine(527) in 16S rRNA + S-adenosyl-L-homocysteine. Specifically methylates the N7 position of guanine in position 527 of 16S rRNA. This is Ribosomal RNA small subunit methyltransferase G from Azoarcus sp. (strain BH72).